We begin with the raw amino-acid sequence, 386 residues long: Succinate--CoA ligase [ADP-forming] subunit beta (386 aa).

Residues 9–244 (KEILRKYGVP…HDEEDPLETR (236 aa)) enclose the ATP-grasp domain. Residues K46, 53–55 (GRG), E99, C102, and E107 each bind ATP. N199 and D213 together coordinate Mg(2+). Residues N264 and 321-323 (GIM) contribute to the substrate site.

It belongs to the succinate/malate CoA ligase beta subunit family. As to quaternary structure, heterotetramer of two alpha and two beta subunits. Mg(2+) is required as a cofactor.

It carries out the reaction succinate + ATP + CoA = succinyl-CoA + ADP + phosphate. It catalyses the reaction GTP + succinate + CoA = succinyl-CoA + GDP + phosphate. It participates in carbohydrate metabolism; tricarboxylic acid cycle; succinate from succinyl-CoA (ligase route): step 1/1. Functionally, succinyl-CoA synthetase functions in the citric acid cycle (TCA), coupling the hydrolysis of succinyl-CoA to the synthesis of either ATP or GTP and thus represents the only step of substrate-level phosphorylation in the TCA. The beta subunit provides nucleotide specificity of the enzyme and binds the substrate succinate, while the binding sites for coenzyme A and phosphate are found in the alpha subunit. In Rickettsia peacockii (strain Rustic), this protein is Succinate--CoA ligase [ADP-forming] subunit beta.